Reading from the N-terminus, the 146-residue chain is Large ribosomal subunit protein uL22 (146 aa).

The interval 1–39 (MAETQTTTPKKKAERRAPPPARARKNRPAAPAPGPHASL) is disordered.

The protein belongs to the universal ribosomal protein uL22 family. As to quaternary structure, part of the 50S ribosomal subunit.

Its function is as follows. This protein binds specifically to 23S rRNA; its binding is stimulated by other ribosomal proteins, e.g. L4, L17, and L20. It is important during the early stages of 50S assembly. It makes multiple contacts with different domains of the 23S rRNA in the assembled 50S subunit and ribosome. Functionally, the globular domain of the protein is located near the polypeptide exit tunnel on the outside of the subunit, while an extended beta-hairpin is found that lines the wall of the exit tunnel in the center of the 70S ribosome. The chain is Large ribosomal subunit protein uL22 from Anaeromyxobacter dehalogenans (strain 2CP-1 / ATCC BAA-258).